Here is a 362-residue protein sequence, read N- to C-terminus: L-arginine:L-lysine amidinotransferase (362 aa).

Active-site residues include Asp-195 and His-244. The active-site Amidino-cysteine intermediate is the Cys-346.

The protein belongs to the amidinotransferase family.

The enzyme catalyses L-lysine + L-arginine = L-homoarginine + L-ornithine. The catalysed reaction is L-canavanine + L-ornithine = L-canaline + L-arginine + H(+). Its function is as follows. Involved in the biosynthesis of phaseolotoxin, a nonhost-specific toxin which is a key component in the development of the halo blight disease of beans. Catalyzes the transfer of an amidino group from arginine to lysine to produce one molecule of homoarginine and one molecule of ornithine, both being precursors in the biosynthesis of phaseolotoxin. Can also use L-canavanine as an alternative amidine donor with L-ornithine as amidine acceptor. This chain is L-arginine:L-lysine amidinotransferase, found in Pseudomonas savastanoi pv. phaseolicola (Pseudomonas syringae pv. phaseolicola).